Reading from the N-terminus, the 139-residue chain is MTRTLAVVLAMTFSAAPVFAEGDIEAGEKAFNKCKSCHQIVSDAGEEIVKGGRTGPNLYGVLGRQAGTADFRYGDDLVAAGEAGLVWDADNFVEYVTDPRAFLRAYLDDSKAKSKMAYKLRSGGEDIAAYLASVSGSSS.

The signal sequence occupies residues 1 to 20 (MTRTLAVVLAMTFSAAPVFA). Heme c-binding residues include Cys34, Cys37, His38, and Met116.

It belongs to the cytochrome c family. Post-translationally, binds 1 heme c group covalently per subunit.

The sequence is that of Cytochrome c-551 from Roseobacter denitrificans (strain ATCC 33942 / OCh 114) (Erythrobacter sp. (strain OCh 114)).